The primary structure comprises 627 residues: uncharacterized protein (627 aa).

At 1–32 the chain is on the extracellular side; that stretch reads MVDDSNYLTPHETALAVVATAMKKARLQLDTL. The helical transmembrane segment at 33 to 53 threads the bilayer; that stretch reads LINSILGGVLFSSGSFLLVAV. At 54-66 the chain is on the cytoplasmic side; sequence YSEDPDIVARNPG. Residues 67–87 traverse the membrane as a helical segment; the sequence is IVNLITGVNFAMGLFYVVMMG. At 88–113 the chain is on the extracellular side; sequence ADLFNSNILFFSVGVLRKAVTIYDLM. Residues 114-134 traverse the membrane as a helical segment; it reads ISWVVSWLGNIAGSLFVSYLF. Residues 135–165 are Cytoplasmic-facing; the sequence is GHLSGISSQKLWIIGSRQIIEQKVSYSFVQT. The chain crosses the membrane as a helical span at residues 166-186; it reads FLKGIACNFFVCLAIYLQLMA. The Extracellular segment spans residues 187–192; the sequence is KPIHVK. Residues 193–213 traverse the membrane as a helical segment; that stretch reads FILMSFPIIDFIGIGFTHVVG. Residues 214–218 are Cytoplasmic-facing; sequence DMSAS. Residues 219-239 form a helical membrane-spanning segment; the sequence is FIAMLNGANVSVGKYIWKLLI. Residues 240-245 lie on the Extracellular side of the membrane; it reads PASLGN. A helical membrane pass occupies residues 246–266; sequence IVGGLFFSAVVPFYLHLVVVE. At 267–627 the chain is on the cytoplasmic side; the sequence is RDRKRLSLPE…FYNRHTSPQL (361 aa). T305 carries the phosphothreonine modification. Residues 512-537 are disordered; it reads PPILPRTTQDTFPHNAPASSPAYTDD. Polar residues predominate over residues 517 to 533; sequence RTTQDTFPHNAPASSPA. S546 is modified (phosphoserine). T588 bears the Phosphothreonine mark. The segment covering 605–614 has biased composition (basic and acidic residues); that stretch reads STTRRQKITE. Residues 605-627 form a disordered region; it reads STTRRQKITEPKNFYNRHTSPQL.

The protein belongs to the FNT transporter (TC 1.A.16) family.

It localises to the membrane. This is an uncharacterized protein from Saccharomyces cerevisiae (strain ATCC 204508 / S288c) (Baker's yeast).